Here is a 579-residue protein sequence, read N- to C-terminus: MSETSSSRRSASKDAVKSYFAGKYNKVLDSILEAEAAISKSPTVAEDLSGSSSSGNSEMSHPSLTASSATSQGISKKELLQQIAGSLFSTSIERLKTAHSSEVSSTPEYSVNDSYGEQECRECDGVFKCSAHFEGAPEYYDDETESGPALEPMTSNSEKDPFIDVFLDKLISRLVPEKLPEREHFSSKTTIEHDLDTGRVPVFSATTLGSNFKKLSKKMGSIFELQDSIVRLLTWRNPTGTVTSLILFTLICFNPMYLVILPIFRFVYGIVVPGYVRKHPLQRSIYPLKRNHGSSLLYDVCYEGKNEYSYGQQFFSKSFMDTLESRNQEIDEISELDKRTENTGELKQGMKVLINLRDMQNMTSGTLHVIEAINSFLRKSSSFQNEECSTKRFFTGFLLIVFLKILSPFVNWSYVCSIFAWCLLIYMHPRAHPKIISFFKTGTMGKEYKNLKKREHQALNMIFDEQPETKFIEIFEIYKKALLPNDWKFFRYSNRIFDPQDPYRRAQQFPPGVDSLADVIPPTGWSFDPNFEWKIDNDVDRWVVERGLNLPITGEFLFDPMFKRRRLIHRVIKNATPVA.

Residues 1–243 lie on the Cytoplasmic side of the membrane; it reads MSETSSSRRS…TWRNPTGTVT (243 aa). Positions 40–70 are disordered; it reads KSPTVAEDLSGSSSSGNSEMSHPSLTASSAT. Low complexity predominate over residues 49 to 63; sequence SGSSSSGNSEMSHPS. The helical transmembrane segment at 244 to 264 threads the bilayer; that stretch reads SLILFTLICFNPMYLVILPIF. Over 265-392 the chain is Peroxisomal; sequence RFVYGIVVPG…FQNEECSTKR (128 aa). Asn-361 carries an N-linked (GlcNAc...) asparagine glycan. Residues 393 to 413 form a helical membrane-spanning segment; that stretch reads FFTGFLLIVFLKILSPFVNWS. Over 414-579 the chain is Cytoplasmic; sequence YVCSIFAWCL…RVIKNATPVA (166 aa).

Belongs to the PEX28-32 family. Peroxin-28 subfamily.

It localises to the peroxisome membrane. Involved in the regulation of peroxisome number, size and distribution. This chain is Peroxisomal membrane protein PEX28 (PEX28), found in Saccharomyces cerevisiae (strain ATCC 204508 / S288c) (Baker's yeast).